Reading from the N-terminus, the 249-residue chain is Pleckstrin homology domain-containing family F member 2 (249 aa).

Ser16 is subject to Phosphoserine. The 97-residue stretch at 35-131 folds into the PH domain; the sequence is VLIGEGVLTK…WMNHINKCVT (97 aa). An N6-acetyllysine modification is found at Lys44. An FYVE-type zinc finger spans residues 152 to 212; it reads DSEATVCMRC…ICDFCYDLLS (61 aa). Positions 158, 161, 175, 178, 183, 186, 204, and 207 each coordinate Zn(2+). Residues 221–233 show a composition bias toward polar residues; the sequence is PTRSDSYSQSLKS. Residues 221 to 249 are disordered; it reads PTRSDSYSQSLKSPLNDASDDDDDDDSSD. The segment covering 238-249 has biased composition (acidic residues); it reads ASDDDDDDDSSD. Phosphoserine is present on residues Ser239 and Ser248.

In terms of assembly, may interact with EEA1. In terms of tissue distribution, expressed in brain, stomach and thymus, as well as in kidney, spleen, and skeletal muscle. Also expressed in peripheral blood mononuclear cells and dendritic cells.

It localises to the early endosome membrane. The protein resides in the endoplasmic reticulum. Functionally, may play a role in early endosome fusion upstream of RAB5, hence regulating receptor trafficking and fluid-phase transport. Enhances cellular sensitivity to TNF-induced apoptosis. This Mus musculus (Mouse) protein is Pleckstrin homology domain-containing family F member 2 (Plekhf2).